The sequence spans 154 residues: Interleukin-2 (154 aa).

Positions 1 to 20 are cleaved as a signal peptide; sequence MYKLQFLSCIALTLALVANS. O-linked (GalNAc...) threonine glycosylation occurs at threonine 23. Cysteine 78 and cysteine 126 are oxidised to a cystine. Residue asparagine 111 is glycosylated (N-linked (GlcNAc...) asparagine).

The protein belongs to the IL-2 family.

Its subcellular location is the secreted. Its function is as follows. Cytokine produced by activated CD4-positive helper T-cells and to a lesser extend activated CD8-positive T-cells and natural killer (NK) cells that plays pivotal roles in the immune response and tolerance. Binds to a receptor complex composed of either the high-affinity trimeric IL-2R (IL2RA/CD25, IL2RB/CD122 and IL2RG/CD132) or the low-affinity dimeric IL-2R (IL2RB and IL2RG). Interaction with the receptor leads to oligomerization and conformation changes in the IL-2R subunits resulting in downstream signaling starting with phosphorylation of JAK1 and JAK3. In turn, JAK1 and JAK3 phosphorylate the receptor to form a docking site leading to the phosphorylation of several substrates including STAT5. This process leads to activation of several pathways including STAT, phosphoinositide-3-kinase/PI3K and mitogen-activated protein kinase/MAPK pathways. Functions as a T-cell growth factor and can increase NK-cell cytolytic activity as well. Promotes strong proliferation of activated B-cells and subsequently immunoglobulin production. Plays a pivotal role in regulating the adaptive immune system by controlling the survival and proliferation of regulatory T-cells, which are required for the maintenance of immune tolerance. Moreover, participates in the differentiation and homeostasis of effector T-cell subsets, including Th1, Th2, Th17 as well as memory CD8-positive T-cells. The polypeptide is Interleukin-2 (IL2) (Camelus bactrianus (Bactrian camel)).